We begin with the raw amino-acid sequence, 349 residues long: Achromobactin transport system permease protein CbrC (349 aa).

The next 10 membrane-spanning stretches (helical) occupy residues 32-52 (LALL…KLML), 82-102 (VLAA…QAMI), 111-131 (ILGI…FLAA), 138-158 (LPLA…WLAW), 168-188 (VLTG…MLVF), 190-210 (PLTT…GASW), 216-236 (LGGW…QVRV), 263-283 (VALA…GLIA), 290-310 (LVAP…AGLV), and 325-345 (DLPA…YLLI).

It belongs to the binding-protein-dependent transport system permease family. FecCD subfamily.

The protein resides in the cell inner membrane. Its function is as follows. Part of the binding-protein-dependent transport system CbrABCD for uptake of the siderophore achromobactin. Probably responsible for the translocation of the substrate across the membrane. This is Achromobactin transport system permease protein CbrC (cbrC) from Dickeya dadantii (strain 3937) (Erwinia chrysanthemi (strain 3937)).